A 132-amino-acid polypeptide reads, in one-letter code: Acid shock protein (132 aa).

The first 21 residues, 1–21 (MKKVLALIVAATMGLSSVAFA), serve as a signal peptide directing secretion. Residues 22 to 69 (AETTAAATAAPAATSTTAAPAVEKAAPAKATHHKKHKATKQTTEQKAQ) constitute a propeptide that is removed on maturation. The segment covering 30–50 (AAPAATSTTAAPAVEKAAPAK) has biased composition (low complexity). Positions 30–132 (AAPAATSTTA…AKKSATAPAA (103 aa)) are disordered. Positions 51 to 60 (ATHHKKHKAT) are enriched in basic residues. The span at 61 to 99 (KQTTEQKAQAAKKAVKKAPAQKAQAAKKAVKKAPVQKAQ) shows a compositional bias: low complexity. The span at 100-124 (AAKKHVKKAPAQKAQAAKKHHKTAK) shows a compositional bias: basic residues.

It belongs to the Asr family. Proteolytic processing gives rise to the active protein.

The protein localises to the periplasm. In terms of biological role, required for growth and/or survival at acidic conditions. This chain is Acid shock protein, found in Yersinia enterocolitica serotype O:8 / biotype 1B (strain NCTC 13174 / 8081).